Here is a 276-residue protein sequence, read N- to C-terminus: Putative pyruvate, phosphate dikinase regulatory protein 1 (276 aa).

ADP is bound at residue 157 to 164 (GVSRTSKT).

The protein belongs to the pyruvate, phosphate/water dikinase regulatory protein family. PDRP subfamily.

The enzyme catalyses N(tele)-phospho-L-histidyl/L-threonyl-[pyruvate, phosphate dikinase] + ADP = N(tele)-phospho-L-histidyl/O-phospho-L-threonyl-[pyruvate, phosphate dikinase] + AMP + H(+). It carries out the reaction N(tele)-phospho-L-histidyl/O-phospho-L-threonyl-[pyruvate, phosphate dikinase] + phosphate + H(+) = N(tele)-phospho-L-histidyl/L-threonyl-[pyruvate, phosphate dikinase] + diphosphate. Its function is as follows. Bifunctional serine/threonine kinase and phosphorylase involved in the regulation of the pyruvate, phosphate dikinase (PPDK) by catalyzing its phosphorylation/dephosphorylation. This Staphylococcus haemolyticus (strain JCSC1435) protein is Putative pyruvate, phosphate dikinase regulatory protein 1.